The primary structure comprises 841 residues: SLIT and NTRK-like protein 6 (841 aa).

The signal sequence occupies residues 1 to 26 (MKLWIHLFYSSLLACISLHSQTPVLS). An LRRNT 1 domain is found at 27–67 (SRGSCDSLCNCEEKDGTMLINCEAKGIKMVSEISVPPSRPF). Over 27–608 (SRGSCDSLCN…RSLTDAVPLS (582 aa)) the chain is Extracellular. 5 LRR repeats span residues 89–110 (NAISIHLGFNNIADIEIGAFNG), 113–134 (LLKQLHINHNSLEILKEDTFHG), 137–158 (NLEFLQADNNFITVIEPSAFSK), 161–182 (RLKVLILNDNAIESLPPNIFRF), and 184–205 (PLTHLDLRGNQLQTLPYVGFLE). Positions 218–269 (NKWACNCDLLQLKTWLENMPPQSIIGDVVCNSPPFFKGSILSRLKKESICPT) constitute an LRRCT 1 domain. One can recognise an LRRNT 2 domain in the interval 320–361 (PSTQLPGPYCPIPCNCKVLSPSGLLIHCQERNIESLSDLRPP). LRR repeat units follow at residues 364–385 (NPRKLILAGNIIHSLMKSDLVE), 388–409 (TLEMLHLGNNRIEVLEEGSFMN), 412–433 (RLQKLYLNGNHLTKLSKGMFLG), 436–457 (NLEYLYLEYNAIKEILPGTFNP), 460–481 (KLKVLYLNNNLLQVLPPHIFSG), and 483–504 (PLTKVNLKTNQFTHLPVSNILD). Positions 517–568 (NPWDCSCDLVGLQQWIQKLSKNTVTDDILCTSPGHLDKKELKALNSEILCPG) constitute an LRRCT 2 domain. Residues 609–629 (VLILGLLIMFITIVFCAAGIV) traverse the membrane as a helical segment. Over 630 to 841 (VLVLHRRRRY…DYLEVLEQQT (212 aa)) the chain is Cytoplasmic.

Belongs to the SLITRK family. In adult brain, highly expressed in putamen with no expression in cerebral cortex. Expressed in adult and fetal lung and fetal liver. Also expressed at high levels in some brain tumors including medulloblastomas and primitive neuroectodermal tumors.

It is found in the cell membrane. Regulator of neurite outgrowth required for normal hearing and vision. The polypeptide is SLIT and NTRK-like protein 6 (SLITRK6) (Homo sapiens (Human)).